The sequence spans 227 residues: UPF0173 metal-dependent hydrolase BCQ_4418 (227 aa).

It belongs to the UPF0173 family.

The polypeptide is UPF0173 metal-dependent hydrolase BCQ_4418 (Bacillus cereus (strain Q1)).